The primary structure comprises 873 residues: Bifunctional uridylyltransferase/uridylyl-removing enzyme (873 aa).

The interval 1-332 (MAFQSPLTFN…NGGETEPAVI (332 aa)) is uridylyltransferase. Residues 333-692 (INEDFQRRGR…MSKKATRGGT (360 aa)) form a uridylyl-removing region. The region spanning 451–573 (VDEHSVRLLN…VRDEERLEYL (123 aa)) is the HD domain. 2 ACT domains span residues 693 to 773 (EVFV…VKTR) and 800 to 873 (LMEL…ELAP).

This sequence belongs to the GlnD family. Mg(2+) serves as cofactor.

The enzyme catalyses [protein-PII]-L-tyrosine + UTP = [protein-PII]-uridylyl-L-tyrosine + diphosphate. The catalysed reaction is [protein-PII]-uridylyl-L-tyrosine + H2O = [protein-PII]-L-tyrosine + UMP + H(+). With respect to regulation, uridylyltransferase (UTase) activity is inhibited by glutamine, while glutamine activates uridylyl-removing (UR) activity. Its function is as follows. Modifies, by uridylylation and deuridylylation, the PII regulatory proteins (GlnB and homologs), in response to the nitrogen status of the cell that GlnD senses through the glutamine level. Under low glutamine levels, catalyzes the conversion of the PII proteins and UTP to PII-UMP and PPi, while under higher glutamine levels, GlnD hydrolyzes PII-UMP to PII and UMP (deuridylylation). Thus, controls uridylylation state and activity of the PII proteins, and plays an important role in the regulation of nitrogen assimilation and metabolism. In Vibrio vulnificus (strain CMCP6), this protein is Bifunctional uridylyltransferase/uridylyl-removing enzyme.